The chain runs to 1099 residues: Carbamoyl phosphate synthase large chain (1099 aa).

The segment at 1 to 402 (MPKREDIKRI…ALGKALRSLE (402 aa)) is carboxyphosphate synthetic domain. ATP contacts are provided by R129, R169, G175, G176, E208, V210, E215, G241, I242, H243, Q285, and E299. Residues 133–328 (KETMEKAGLE…IAKVAALLAV (196 aa)) enclose the ATP-grasp 1 domain. The Mg(2+) site is built by Q285, E299, and N301. Positions 285, 299, and 301 each coordinate Mn(2+). Positions 403 to 541 (LDAAPKLDLE…STYNGVENEA (139 aa)) are oligomerization domain. The tract at residues 542-944 (VPSDREKIMI…AFAKAQIAAG (403 aa)) is carbamoyl phosphate synthetic domain. Residues 666 to 857 (AKLLKQIGLK…VARIAAKIMV (192 aa)) enclose the ATP-grasp 2 domain. ATP is bound by residues R702, K741, L743, E748, G773, V774, H775, S776, Q816, and E828. Q816, E828, and N830 together coordinate Mg(2+). Mn(2+) contacts are provided by Q816, E828, and N830. One can recognise an MGS-like domain in the interval 945–1099 (NPLPTTGAIL…VRRLTDTWKM (155 aa)). Residues 945–1099 (NPLPTTGAIL…VRRLTDTWKM (155 aa)) form an allosteric domain region.

This sequence belongs to the CarB family. In terms of assembly, composed of two chains; the small (or glutamine) chain promotes the hydrolysis of glutamine to ammonia, which is used by the large (or ammonia) chain to synthesize carbamoyl phosphate. Tetramer of heterodimers (alpha,beta)4. Mg(2+) is required as a cofactor. It depends on Mn(2+) as a cofactor.

It catalyses the reaction hydrogencarbonate + L-glutamine + 2 ATP + H2O = carbamoyl phosphate + L-glutamate + 2 ADP + phosphate + 2 H(+). It carries out the reaction hydrogencarbonate + NH4(+) + 2 ATP = carbamoyl phosphate + 2 ADP + phosphate + 2 H(+). The protein operates within amino-acid biosynthesis; L-arginine biosynthesis; carbamoyl phosphate from bicarbonate: step 1/1. It functions in the pathway pyrimidine metabolism; UMP biosynthesis via de novo pathway; (S)-dihydroorotate from bicarbonate: step 1/3. Large subunit of the glutamine-dependent carbamoyl phosphate synthetase (CPSase). CPSase catalyzes the formation of carbamoyl phosphate from the ammonia moiety of glutamine, carbonate, and phosphate donated by ATP, constituting the first step of 2 biosynthetic pathways, one leading to arginine and/or urea and the other to pyrimidine nucleotides. The large subunit (synthetase) binds the substrates ammonia (free or transferred from glutamine from the small subunit), hydrogencarbonate and ATP and carries out an ATP-coupled ligase reaction, activating hydrogencarbonate by forming carboxy phosphate which reacts with ammonia to form carbamoyl phosphate. This Thermotoga sp. (strain RQ2) protein is Carbamoyl phosphate synthase large chain.